The primary structure comprises 119 residues: Circadian clock oscillator protein KaiB (119 aa).

It belongs to the KaiB family. As to quaternary structure, the KaiABC complex composition changes during the circadian cycle to control KaiC phosphorylation. Complexes KaiC(6), KaiA(2-4):KaiC(6), KaiB(6):KaiC(6) and KaiC(6):KaiB(6):KaiA(12) are among the most important forms, many form cooperatively. Undergoes a major conformational rearrangment; in the free state forms homotetramers as a dimer of dimers. When bound to the CI domain of KaiC switches to a monomeric thioredoxin-fold (KaiB(fs)). KaiB(fs) binds CikA, leading it to dephosphorylate phospho-RpaA.

Key component of the KaiABC oscillator complex, which constitutes the main circadian regulator in cyanobacteria. Complex composition changes during the circadian cycle to control KaiC phosphorylation. KaiA stimulates KaiC autophosphorylation, while KaiB sequesters KaiA, leading to KaiC autodephosphorylation. Phospho-Ser-431 KaiC accumulation triggers binding of KaiB to form the KaiB(6):KaiC(6) complex, leading to changes in output regulators CikA and SasA. KaiB switches to a thioredoxin-like fold (KaiB(fs)) when bound to KaiC. KaiB(6):KaiC(6) formation exposes a site for KaiA binding that sequesters KaiA from KaiC, making the KaiC(6):KaiB(6):KaiA(12) complex that results in KaiC autodephosphorylation. Its function is as follows. A metamorphic protein which reversibly switches between an inactive tetrameric fold and a rare, thioredoxin-like monomeric fold (KaiB(fs)). KaiB(fs) binds phospho-KaiC, KaiA and CikA. KaiA and CikA compete for binding to KaiB(fs), and KaiB(fs) and SasA compete for binding to KaiC, thus the clock oscillator and output signal pathway are tightly coupled. This Synechococcus sp. (strain CC9311) protein is Circadian clock oscillator protein KaiB.